We begin with the raw amino-acid sequence, 551 residues long: Steroid transmembrane transporter SLC22A24 (551 aa).

12 consecutive transmembrane segments (helical) span residues 16 to 36 (FQIL…PHTV), 146 to 166 (SVAK…GGHL), 174 to 194 (FIVT…AFAP), 204 to 222 (FLTG…LLIL), 235 to 255 (ALIF…AFGI), 260 to 280 (HLQL…RWLS), 350 to 370 (ICLL…LLIN), 378 to 398 (VFLL…LGNF), 410 to 430 (IIFM…TQEM), 435 to 455 (LVLA…TAVL), 469 to 489 (LGVI…LMIL), and 496 to 516 (LPWI…LLLP). Residues 524 to 551 (PDSIQDVENKRKSSREVKKDAVAKVTPF) are disordered. Residues 530 to 545 (VENKRKSSREVKKDAV) are compositionally biased toward basic and acidic residues.

Localized to the kidney. Mainly expressed in the late segments of proximal tubules.

The protein resides in the cell membrane. It catalyses the reaction estrone 3-sulfate(out) + glutarate(in) = estrone 3-sulfate(in) + glutarate(out). It carries out the reaction 17beta-estradiol 17-O-(beta-D-glucuronate)(out) + glutarate(in) = 17beta-estradiol 17-O-(beta-D-glucuronate)(in) + glutarate(out). The catalysed reaction is dehydroepiandrosterone 3-sulfate(out) + glutarate(in) = dehydroepiandrosterone 3-sulfate(in) + glutarate(out). Functionally, renal transmembrane organic anion/dicarboxylate exchanger that participates in the reabsorption of conjugated steroids, as well as bile acids, driven by an outward gradient of dicarboxylates such as glutarate or succinate. Transports estrone 3-sulfate and estradiol-17-glucuronide (17beta-estradiol 17-O-(beta-D-glucuronate)), but not androstanediol glucuronide (5alpha-androstane-3alpha,17beta-diol 3-O-(beta-D-glucuronate)), nor taurocholate. Prefers sulfate conjugates of steroids rather than glucuronide conjugates. This Rattus norvegicus (Rat) protein is Steroid transmembrane transporter SLC22A24.